Reading from the N-terminus, the 116-residue chain is Ribosome-binding factor A (116 aa).

The protein belongs to the RbfA family. As to quaternary structure, monomer. Binds 30S ribosomal subunits, but not 50S ribosomal subunits or 70S ribosomes.

The protein resides in the cytoplasm. One of several proteins that assist in the late maturation steps of the functional core of the 30S ribosomal subunit. Associates with free 30S ribosomal subunits (but not with 30S subunits that are part of 70S ribosomes or polysomes). Required for efficient processing of 16S rRNA. May interact with the 5'-terminal helix region of 16S rRNA. The protein is Ribosome-binding factor A of Streptococcus mutans serotype c (strain ATCC 700610 / UA159).